The chain runs to 741 residues: Catalase-peroxidase 2 (741 aa).

Residues 1 to 27 (MKINTLPTLSALTLAMSLALGAGMATA) form the signal peptide. Positions 106-229 (WHSAGVYRIF…MGATQMGLIY (124 aa)) form a cross-link, tryptophyl-tyrosyl-methioninium (Trp-Tyr) (with M-255). His-107 functions as the Proton acceptor in the catalytic mechanism. A cross-link (tryptophyl-tyrosyl-methioninium (Tyr-Met) (with W-106)) is located at residues 229–255 (YVNPEGPNGVPDPLASAKEIRDTFGRM). His-270 serves as a coordination point for heme b.

Belongs to the peroxidase family. Peroxidase/catalase subfamily. Homodimer or homotetramer. It depends on heme b as a cofactor. Formation of the three residue Trp-Tyr-Met cross-link is important for the catalase, but not the peroxidase activity of the enzyme.

The enzyme catalyses H2O2 + AH2 = A + 2 H2O. The catalysed reaction is 2 H2O2 = O2 + 2 H2O. Functionally, bifunctional enzyme with both catalase and broad-spectrum peroxidase activity. In Shewanella oneidensis (strain ATCC 700550 / JCM 31522 / CIP 106686 / LMG 19005 / NCIMB 14063 / MR-1), this protein is Catalase-peroxidase 2.